We begin with the raw amino-acid sequence, 109 residues long: Oncomodulin-1 (109 aa).

Ser-2 is modified (N-acetylserine). EF-hand domains are found at residues 39 to 74 and 78 to 109; these read MSANQVKDVFRFIDNDQSGYLDEEELKFFLQKFESG and LTESETKSLMAAADNDGDGKIGAEEFQEMVHS. 10 residues coordinate Ca(2+): Asp-52, Asp-54, Ser-56, Tyr-58, Glu-63, Asp-91, Asp-93, Asp-95, Lys-97, and Glu-102.

This sequence belongs to the parvalbumin family.

Its function is as follows. Has some calmodulin-like activity with respect to enzyme activation and growth regulation. Binds two calcium ions. The protein is Oncomodulin-1 (OCM) of Homo sapiens (Human).